The following is a 473-amino-acid chain: uncharacterized protein (473 aa).

The first 19 residues, 1 to 19 (MIRAFLVFPYLYILVQSNG), serve as a signal peptide directing secretion.

This is an uncharacterized protein from Methanocaldococcus jannaschii (strain ATCC 43067 / DSM 2661 / JAL-1 / JCM 10045 / NBRC 100440) (Methanococcus jannaschii).